A 451-amino-acid polypeptide reads, in one-letter code: D(1A) dopamine receptor (451 aa).

Residues 1–22 (MTFNITSMDEDVLLTERESSFR) lie on the Extracellular side of the membrane. A glycan (N-linked (GlcNAc...) asparagine) is linked at asparagine 4. The chain crosses the membrane as a helical span at residues 23-48 (VLTGCFLSVLILSTLLGNTLVCAAVI). Residues 49 to 59 (RFRHLRSKVTN) lie on the Cytoplasmic side of the membrane. Residues 60 to 86 (FFVISLAVSDLLVAVLVMPWKAVAEIA) traverse the membrane as a helical segment. At 87-95 (GFWPFGTFC) the chain is on the extracellular side. The cysteines at positions 95 and 185 are disulfide-linked. Residues 96–118 (NIWVAFDIMCSTASILNLCVISV) traverse the membrane as a helical segment. Residues 119-137 (DRYWAISSPFRYERKMTPK) are Cytoplasmic-facing. The chain crosses the membrane as a helical span at residues 138 to 162 (VAFIMIGVAWTLSVLISFIPVQLNW). Over 163-191 (HKAKTTSFFDLNITLHDRTMDNCDSSLNR) the chain is Extracellular. Residues 192-217 (TYAISSSLISFYIPVAIMIVTYTRIY) form a helical membrane-spanning segment. The Cytoplasmic portion of the chain corresponds to 218 to 271 (RIAAKQIRRISALERAAVHAKNCQNSTSNRNSLDCQQPESSLKTSFKRETKVLK). A helical membrane pass occupies residues 272–298 (TLSVIMGVFVCCWLPFFILNCIVPFCD). Over 299-315 (PSLTTSGTEPFCISSTT) the chain is Extracellular. Residues 316 to 340 (FDVFVWFGWANSSLNPIIYAFNADF) traverse the membrane as a helical segment. At 341–451 (RKAFSNLLGC…PITQNGQPKT (111 aa)) the chain is on the cytoplasmic side. The S-palmitoyl cysteine moiety is linked to residue cysteine 350.

Belongs to the G-protein coupled receptor 1 family. In terms of tissue distribution, brain.

It localises to the cell membrane. Its subcellular location is the cell projection. The protein localises to the cilium membrane. Dopamine receptor whose activity is mediated by G proteins which activate adenylyl cyclase. The chain is D(1A) dopamine receptor (drd1) from Xenopus laevis (African clawed frog).